The sequence spans 328 residues: tRNA uridine(34) hydroxylase (328 aa).

One can recognise a Rhodanese domain in the interval 123–217 (SDPDVLLVDT…YLEEVPQEES (95 aa)). The active-site Cysteine persulfide intermediate is cysteine 177.

The protein belongs to the TrhO family.

It carries out the reaction uridine(34) in tRNA + AH2 + O2 = 5-hydroxyuridine(34) in tRNA + A + H2O. Functionally, catalyzes oxygen-dependent 5-hydroxyuridine (ho5U) modification at position 34 in tRNAs. The sequence is that of tRNA uridine(34) hydroxylase from Psychromonas ingrahamii (strain DSM 17664 / CCUG 51855 / 37).